Consider the following 833-residue polypeptide: Leucine--tRNA ligase (833 aa).

The 'HIGH' region signature appears at 41 to 52 (PYPSGAGLHVGH). The 'KMSKS' region signature appears at 610 to 614 (KMSKS). Residue K613 coordinates ATP.

It belongs to the class-I aminoacyl-tRNA synthetase family.

The protein localises to the cytoplasm. The enzyme catalyses tRNA(Leu) + L-leucine + ATP = L-leucyl-tRNA(Leu) + AMP + diphosphate. The polypeptide is Leucine--tRNA ligase (Streptococcus pyogenes serotype M12 (strain MGAS2096)).